The following is a 414-amino-acid chain: Probable acetyl-CoA acetyltransferase (414 aa).

The active-site Acyl-thioester intermediate is cysteine 110. CoA is bound by residues tyrosine 205, 244–246 (KVL), and lysine 249. Tyrosine 205 contributes to the K(+) binding site. K(+)-binding residues include alanine 266 and alanine 268. Serine 269 is a binding site for CoA. Position 366 (valine 366) interacts with K(+). Active-site proton acceptor residues include histidine 370 and cysteine 400.

This sequence belongs to the thiolase-like superfamily. Thiolase family.

The catalysed reaction is 2 acetyl-CoA = acetoacetyl-CoA + CoA. The sequence is that of Probable acetyl-CoA acetyltransferase from Dictyostelium discoideum (Social amoeba).